A 525-amino-acid chain; its full sequence is Cytochrome P450 4V2 (525 aa).

The chain crosses the membrane as a helical span at residues Leu-14–Phe-34. Positions 329 and 467 each coordinate heme.

Belongs to the cytochrome P450 family. The cofactor is heme.

It localises to the endoplasmic reticulum membrane. It catalyses the reaction dodecanoate + reduced [NADPH--hemoprotein reductase] + O2 = 12-hydroxydodecanoate + oxidized [NADPH--hemoprotein reductase] + H2O + H(+). The catalysed reaction is tetradecanoate + reduced [NADPH--hemoprotein reductase] + O2 = 14-hydroxytetradecanoate + oxidized [NADPH--hemoprotein reductase] + H2O + H(+). It carries out the reaction hexadecanoate + reduced [NADPH--hemoprotein reductase] + O2 = 16-hydroxyhexadecanoate + oxidized [NADPH--hemoprotein reductase] + H2O + H(+). The enzyme catalyses (5Z,8Z,11Z,14Z,17Z)-eicosapentaenoate + reduced [NADPH--hemoprotein reductase] + O2 = 20-hydroxy-(5Z,8Z,11Z,14Z,17Z)-eicosapentaenoate + oxidized [NADPH--hemoprotein reductase] + H2O + H(+). It catalyses the reaction (4Z,7Z,10Z,13Z,16Z,19Z)-docosahexaenoate + reduced [NADPH--hemoprotein reductase] + O2 = 22-hydroxy-(4Z,7Z,10Z,13Z,16Z,19Z)-docosahexaenoate + oxidized [NADPH--hemoprotein reductase] + H2O + H(+). Its pathway is lipid metabolism; fatty acid metabolism. Inhibited by N-hydroxy-N'-(4-n-butyl-2-methylphenyl formamidine)(HET0016) with an IC(50) of 38 nM. A cytochrome P450 monooxygenase involved in fatty acid metabolism in the eye. Catalyzes the omega-hydroxylation of polyunsaturated fatty acids (PUFAs) docosahexaenoate (DHA) and its precursor eicosapentaenoate (EPA), and may contribute to the homeostasis of these retinal PUFAs. Omega hydroxylates saturated fatty acids such as laurate, myristate and palmitate, the catalytic efficiency decreasing in the following order: myristate &gt; laurate &gt; palmitate (C14&gt;C12&gt;C16). Mechanistically, uses molecular oxygen inserting one oxygen atom into a substrate, and reducing the second into a water molecule, with two electrons provided by NADPH via cytochrome P450 reductase (CPR; NADPH-ferrihemoprotein reductase). In Mus musculus (Mouse), this protein is Cytochrome P450 4V2 (Cyp4v2).